We begin with the raw amino-acid sequence, 353 residues long: rRNA methyltransferase 1, mitochondrial (353 aa).

Residues 1–20 (MALLSTVRGATWGRLVTRHF) constitute a mitochondrion transit peptide. A disordered region spans residues 311-353 (PTEGERRQLLQDPQEPSARSEGLSMAQHPGLSSGPEKERQNEG).

The protein belongs to the class IV-like SAM-binding methyltransferase superfamily. RNA methyltransferase TrmH family.

It is found in the mitochondrion matrix. The enzyme catalyses guanosine(1145) in 16S rRNA + S-adenosyl-L-methionine = 2'-O-methylguanosine(1145) in 16S rRNA + S-adenosyl-L-homocysteine + H(+). In terms of biological role, S-adenosyl-L-methionine-dependent 2'-O-ribose methyltransferase that catalyzes the formation of 2'-O-methylguanosine at position 1145 (Gm1145) in the 16S mitochondrial large subunit ribosomal RNA (mtLSU rRNA), a universally conserved modification in the peptidyl transferase domain of the mtLSU rRNA. This chain is rRNA methyltransferase 1, mitochondrial, found in Homo sapiens (Human).